The following is a 689-amino-acid chain: DNA topoisomerase 1 (689 aa).

Positions 3–113 (DNLVIVESPA…KENRVVFNEI (111 aa)) constitute a Toprim domain. Mg(2+) contacts are provided by E9 and D82. The Topo IA-type catalytic domain maps to 129–557 (EMNLVDAQQA…FFSSFKQDVE (429 aa)). The segment at 163–168 (SAGRVQ) is interaction with DNA. Y298 (O-(5'-phospho-DNA)-tyrosine intermediate) is an active-site residue. Positions 328–357 (SKRKASGKQGDQDAHEAIRPSSTMRTPDDM) are disordered. 3 consecutive C4-type zinc fingers follow at residues 577 to 603 (CEVC…FPDC), 617 to 645 (CPKC…YPEC), and 658 to 681 (CPKC…CSNC).

The protein belongs to the type IA topoisomerase family. As to quaternary structure, monomer. Requires Mg(2+) as cofactor.

It carries out the reaction ATP-independent breakage of single-stranded DNA, followed by passage and rejoining.. Its function is as follows. Releases the supercoiling and torsional tension of DNA, which is introduced during the DNA replication and transcription, by transiently cleaving and rejoining one strand of the DNA duplex. Introduces a single-strand break via transesterification at a target site in duplex DNA. The scissile phosphodiester is attacked by the catalytic tyrosine of the enzyme, resulting in the formation of a DNA-(5'-phosphotyrosyl)-enzyme intermediate and the expulsion of a 3'-OH DNA strand. The free DNA strand then undergoes passage around the unbroken strand, thus removing DNA supercoils. Finally, in the religation step, the DNA 3'-OH attacks the covalent intermediate to expel the active-site tyrosine and restore the DNA phosphodiester backbone. The sequence is that of DNA topoisomerase 1 from Staphylococcus aureus (strain bovine RF122 / ET3-1).